We begin with the raw amino-acid sequence, 213 residues long: MNKNFEYPEIASLEQPAKKLVVLLHGVGSDGHDLIGLVPYIKDDLPDCHFISPHGIEPYDMAPYGRQWFSLQDRSPDNISKLLVKNISKLDDIIKQKQEELNLTNKDTIIIGFSQGTMIGLYLTLIQKEPFYCTVGFSGALIPPAEINNKTTPICLIHGELDDVVSVNEMYNASHYLSKYHIPHSGHKLTRLSHSIDGRGIEIAVNFICHTVA.

Residues Ser-114, Asp-162, and His-194 each act as charge relay system in the active site.

Belongs to the AB hydrolase superfamily. AB hydrolase 2 family.

This is an uncharacterized protein from Rickettsia bellii (strain RML369-C).